We begin with the raw amino-acid sequence, 493 residues long: Accumulates dyads protein 4 (493 aa).

In terms of assembly, interacts with CNM67, SPO21/MPC70 and NUD1.

The protein localises to the cytoplasm. The protein resides in the cytoskeleton. It localises to the microtubule organizing center. Its subcellular location is the spindle pole body. Involved in the pathway that organizes the shaping and sizing of the prospore membrane (PSM) during sporulation. May be required to stabilize the outer plaque of the spindle pole body (SPB). This is Accumulates dyads protein 4 (ADY4) from Saccharomyces cerevisiae (strain ATCC 204508 / S288c) (Baker's yeast).